The primary structure comprises 462 residues: 2-amino-5-chloromuconic acid deaminase (462 aa).

Residues Lys79 and Ser156 each act as charge relay system in the active site. Ser180 (acyl-ester intermediate) is an active-site residue.

It belongs to the amidase family.

The catalysed reaction is (2Z,4E)-2-aminomuconate + H2O = (3E)-2-oxohex-3-enedioate + NH4(+). The protein operates within xenobiotic degradation; nitrobenzene degradation. Its pathway is xenobiotic degradation; 4-chloronitrobenzene degradation. Involved in the biodegradation of nitroaromatic and chlorinated nitroaromatic compounds. Catalyzes the conversion of 2-amino-5-chloromuconic acid into 2-hydroxy-5-chloromuconic acid and ammonia. Also able to catalyze the transformation of 2-aminomuconic acid into 2-hydroxymuconic acid. The chain is 2-amino-5-chloromuconic acid deaminase from Comamonas testosteroni (Pseudomonas testosteroni).